A 959-amino-acid polypeptide reads, in one-letter code: rDNA transcriptional regulator pol5 (959 aa).

A phosphoserine mark is found at Ser742 and Ser743. Residues 936 to 959 are disordered; sequence HQQTSTAASSPQKTGHHENEKTNH. Residues 937–948 show a composition bias toward polar residues; it reads QQTSTAASSPQK. The span at 950–959 shows a compositional bias: basic and acidic residues; sequence GHHENEKTNH.

This sequence belongs to the MYBBP1A family. In terms of assembly, interacts with cdc10.

The protein resides in the nucleus. Plays an important role in the regulation of rRNA transcription. Binds to rDNA promoter fragments. In Schizosaccharomyces pombe (strain 972 / ATCC 24843) (Fission yeast), this protein is rDNA transcriptional regulator pol5 (pol5).